The following is a 798-amino-acid chain: Serine/threonine-protein kinase haspin (798 aa).

A disordered region spans residues 1-110 (MAASLPGPGS…WKLRARPSLT (110 aa)). At serine 58 the chain carries Phosphoserine. The span at 59-70 (QSDDPDDPDDPD) shows a compositional bias: acidic residues. Serine 93 is subject to Phosphoserine; by AURKB. Threonine 97 bears the Phosphothreonine mark. Serine 143 carries the post-translational modification Phosphoserine; by AURKB. Serine 147 is modified (phosphoserine). Positions 275–350 (LVVGNGPEGP…KHQEATETSL (76 aa)) are disordered. The span at 300-315 (CQERGLQEAVRREHQE) shows a compositional bias: basic and acidic residues. Residues 484 to 798 (LQRCEKIGEG…DLLCQHSLFK (315 aa)) enclose the Protein kinase domain. ATP contacts are provided by residues 490–498 (IGEGVFGEV), lysine 511, 606–611 (EFGGID), 649–654 (DLHWGN), and 687–689 (DYT). Aspartate 649 serves as the catalytic Proton acceptor.

Belongs to the protein kinase superfamily. Ser/Thr protein kinase family. Haspin subfamily. It depends on Mg(2+) as a cofactor. Autophosphorylated on both serine and threonine residues. Strongly phosphorylated during mitosis but this does not appear to significantly affect its intrinsic kinase activity. Phosphorylation by AURKB is required for full activity toward histone H3 at 'Ser-3' in mitosis. Strongly expressed in testis. Also present in thymus and bone marrow and low levels observed in prostate, intestine, lung, spleen and lymph node. Expressed in fetal skin, liver, kidney and small intestine and also in proliferating but not non-proliferating cell lines.

It is found in the nucleus. The protein localises to the chromosome. It localises to the cytoplasm. Its subcellular location is the cytoskeleton. The protein resides in the spindle. It carries out the reaction L-seryl-[protein] + ATP = O-phospho-L-seryl-[protein] + ADP + H(+). It catalyses the reaction L-threonyl-[protein] + ATP = O-phospho-L-threonyl-[protein] + ADP + H(+). Its activity is regulated as follows. Constitutive activity that does not require phosphorylation. Specifically inhibited by 3-(1H-indazol-5-yl)-N-propylimidazo[1,2-b]pyridazin-6-amine (CHR-6494). Serine/threonine-protein kinase that phosphorylates histone H3 at 'Thr-3' (H3T3ph) during mitosis. May act through H3T3ph to both position and modulate activation of AURKB and other components of the chromosomal passenger complex (CPC) at centromeres to ensure proper chromatid cohesion, metaphase alignment and normal progression through the cell cycle. The chain is Serine/threonine-protein kinase haspin from Homo sapiens (Human).